Reading from the N-terminus, the 301-residue chain is Heme A synthase (301 aa).

Residues 1–5 lie on the Cytoplasmic side of the membrane; it reads MHKKL. The helical transmembrane segment at 6 to 26 threads the bilayer; that stretch reads AFFSGFVTLGMMLVLIMGGTV. The Extracellular segment spans residues 27-62; it reads TKTDSGDGCGTDWPLCHGKLIPTNPSVETMIEYSHR. The cysteines at positions 35 and 42 are disulfide-linked. Glu-58 is a catalytic residue. His-61 serves as a coordination point for heme o. A helical membrane pass occupies residues 63–83; it reads VVSGIEGLLIIALAIWTFIAV. Over 84–90 the chain is Cytoplasmic; it reads KHRVDVK. A helical transmembrane segment spans residues 91 to 111; it reads IFAFLAFIFMLIQSIIGAGAV. The Extracellular segment spans residues 112–121; that stretch reads IWQQSDAILA. A helical membrane pass occupies residues 122-142; sequence LHFGISLVSFASLLILTILLF. A heme o-binding site is contributed by His-123. At 143–158 the chain is on the cytoplasmic side; it reads EGDREHQVVSRRLRSH. Residues 159-179 form a helical membrane-spanning segment; sequence LYGLSIYTMIVVYTGAYVRHL. The Extracellular segment spans residues 180-203; it reads GATYACVGWPICEQEVWTFESYVQ. Cys-185 and Cys-191 are oxidised to a cystine. Residues 204–224 traverse the membrane as a helical segment; that stretch reads MGHRVMAGLLVLYTLYVLYLA. A heme b-binding site is contributed by His-206. Topologically, residues 225–234 are cytoplasmic; it reads RKEMNRLIER. A helical membrane pass occupies residues 235 to 255; it reads GMMASLFFILLQVGTGAWIVL. Residues 256 to 259 are Extracellular-facing; it reads GGHA. A helical membrane pass occupies residues 260-280; it reads TYVPLLHAFLITCYFGILSYL. His-266 provides a ligand contact to heme b. Residues 281 to 301 lie on the Cytoplasmic side of the membrane; it reads SYHAYRSTARQDGAQLKNMNG.

This sequence belongs to the COX15/CtaA family. Type 1 subfamily. In terms of assembly, interacts with CtaB. It depends on heme b as a cofactor.

It localises to the cell membrane. The enzyme catalyses Fe(II)-heme o + 2 A + H2O = Fe(II)-heme a + 2 AH2. The protein operates within porphyrin-containing compound metabolism; heme A biosynthesis; heme A from heme O: step 1/1. Catalyzes the conversion of heme O to heme A by two successive hydroxylations of the methyl group at C8. The first hydroxylation forms heme I, the second hydroxylation results in an unstable dihydroxymethyl group, which spontaneously dehydrates, resulting in the formyl group of heme A. The protein is Heme A synthase of Exiguobacterium sp. (strain ATCC BAA-1283 / AT1b).